The chain runs to 348 residues: Selenide, water dikinase (348 aa).

Cys-17 is an active-site residue. ATP-binding positions include Lys-20 and 47–49; that span reads THD. Mg(2+) is bound at residue Asp-50. ATP is bound by residues Asp-67, Asp-90, and 138 to 140; that span reads GHT. Asp-90 serves as a coordination point for Mg(2+). Residue Asp-226 coordinates Mg(2+).

This sequence belongs to the selenophosphate synthase 1 family. Class I subfamily. In terms of assembly, homodimer. Requires Mg(2+) as cofactor.

The enzyme catalyses hydrogenselenide + ATP + H2O = selenophosphate + AMP + phosphate + 2 H(+). In terms of biological role, synthesizes selenophosphate from selenide and ATP. The chain is Selenide, water dikinase from Porphyromonas gingivalis (strain ATCC 33277 / DSM 20709 / CIP 103683 / JCM 12257 / NCTC 11834 / 2561).